Consider the following 96-residue polypeptide: Basic blue protein (96 aa).

The Phytocyanin domain occupies 1–96 (AVYVVGGSGG…SGMKIAVNAL (96 aa)). Histidine 39, cysteine 79, histidine 84, and methionine 89 together coordinate Cu cation. A disulfide bridge links cysteine 52 with cysteine 85.

This Cucumis sativus (Cucumber) protein is Basic blue protein.